We begin with the raw amino-acid sequence, 673 residues long: Ion-translocating oxidoreductase complex subunit C (673 aa).

4Fe-4S ferredoxin-type domains are found at residues 368 to 397 (MGAPQEETSCIRCSACADACPADLLPQQLY) and 407 to 436 (KATAHHIADCIECGACAWVCPSNIPLVQYF). 8 residues coordinate [4Fe-4S] cluster: Cys-377, Cys-380, Cys-383, Cys-387, Cys-416, Cys-419, Cys-422, and Cys-426. A disordered region spans residues 529 to 554 (EARKAQARAKQAGHPMADSATSGDDP).

This sequence belongs to the 4Fe4S bacterial-type ferredoxin family. RnfC subfamily. The complex is composed of six subunits: RsxA, RsxB, RsxC, RsxD, RsxE and RsxG. It depends on [4Fe-4S] cluster as a cofactor.

It is found in the cell inner membrane. In terms of biological role, part of a membrane-bound complex that couples electron transfer with translocation of ions across the membrane. Required to maintain the reduced state of SoxR. This Salmonella arizonae (strain ATCC BAA-731 / CDC346-86 / RSK2980) protein is Ion-translocating oxidoreductase complex subunit C.